A 221-amino-acid polypeptide reads, in one-letter code: Carbonic anhydrase (221 aa).

Residues Cys38, Asp40, His99, and Cys102 each coordinate Zn(2+).

This sequence belongs to the beta-class carbonic anhydrase family. Zn(2+) serves as cofactor.

It carries out the reaction hydrogencarbonate + H(+) = CO2 + H2O. This is Carbonic anhydrase (cynT) from Helicobacter pylori (strain ATCC 700392 / 26695) (Campylobacter pylori).